The sequence spans 277 residues: tRNA pseudouridine synthase A (277 aa).

The Nucleophile role is filled by Asp-51. Residue Tyr-109 participates in substrate binding.

It belongs to the tRNA pseudouridine synthase TruA family. In terms of assembly, homodimer.

The catalysed reaction is uridine(38/39/40) in tRNA = pseudouridine(38/39/40) in tRNA. Its function is as follows. Formation of pseudouridine at positions 38, 39 and 40 in the anticodon stem and loop of transfer RNAs. The polypeptide is tRNA pseudouridine synthase A (Nitrosomonas eutropha (strain DSM 101675 / C91 / Nm57)).